Here is an 834-residue protein sequence, read N- to C-terminus: Protein translocase subunit SecA (834 aa).

ATP is bound by residues Gln85, 103 to 107 (GEGKT), and Asp491. Zn(2+) contacts are provided by Cys818, Cys820, Cys829, and Cys830.

The protein belongs to the SecA family. In terms of assembly, monomer and homodimer. Part of the essential Sec protein translocation apparatus which comprises SecA, SecYEG and auxiliary proteins SecDF. Other proteins may also be involved. The cofactor is Zn(2+).

The protein localises to the cell membrane. Its subcellular location is the cytoplasm. It carries out the reaction ATP + H2O + cellular proteinSide 1 = ADP + phosphate + cellular proteinSide 2.. Functionally, part of the Sec protein translocase complex. Interacts with the SecYEG preprotein conducting channel. Has a central role in coupling the hydrolysis of ATP to the transfer of proteins into and across the cell membrane, serving as an ATP-driven molecular motor driving the stepwise translocation of polypeptide chains across the membrane. This is Protein translocase subunit SecA from Clostridium kluyveri (strain ATCC 8527 / DSM 555 / NBRC 12016 / NCIMB 10680 / K1).